Reading from the N-terminus, the 644-residue chain is 1-deoxy-D-xylulose-5-phosphate synthase (644 aa).

Residues His-78 and 120-122 each bind thiamine diphosphate; that span reads GHA. Asp-149 lines the Mg(2+) pocket. Residues 150–151, Asn-178, and Glu-373 contribute to the thiamine diphosphate site; that span reads AA. Residue Asn-178 coordinates Mg(2+).

This sequence belongs to the transketolase family. DXPS subfamily. As to quaternary structure, homodimer. Mg(2+) is required as a cofactor. It depends on thiamine diphosphate as a cofactor.

It catalyses the reaction D-glyceraldehyde 3-phosphate + pyruvate + H(+) = 1-deoxy-D-xylulose 5-phosphate + CO2. The protein operates within metabolic intermediate biosynthesis; 1-deoxy-D-xylulose 5-phosphate biosynthesis; 1-deoxy-D-xylulose 5-phosphate from D-glyceraldehyde 3-phosphate and pyruvate: step 1/1. Catalyzes the acyloin condensation reaction between C atoms 2 and 3 of pyruvate and glyceraldehyde 3-phosphate to yield 1-deoxy-D-xylulose-5-phosphate (DXP). This chain is 1-deoxy-D-xylulose-5-phosphate synthase, found in Chlamydia felis (strain Fe/C-56) (Chlamydophila felis).